Consider the following 388-residue polypeptide: uncharacterized protein (388 aa).

Residues 68–96 (KVDRMSEEEERMAIATRKAKEVAKELSET) are a coiled coil. A disordered region spans residues 162-388 (GSHPLVREFN…PPQQDWFDSV (227 aa)). Basic and acidic residues-rich tracts occupy residues 166–176 (LVREFNGEKPP) and 196–208 (ATDK…QSDK). The span at 233–251 (GVKHQHAIRRDDRHRHGMR) shows a compositional bias: basic residues. 2 stretches are compositionally biased toward low complexity: residues 265–279 (QQQQ…SRGQ) and 293–346 (QRRP…QRPA).

This is an uncharacterized protein from Frog virus 3 (isolate Goorha) (FV-3).